Consider the following 445-residue polypeptide: Elongation factor 1-alpha (445 aa).

Residues 5 to 230 (KVHISLVVIG…DNLEPPKRPS (226 aa)) enclose the tr-type G domain. The segment at 14-21 (GHVDSGKS) is G1. 14 to 21 (GHVDSGKS) provides a ligand contact to GTP. An N6,N6-dimethyllysine modification is found at K55. The segment at 70–74 (CITID) is G2. K79 is modified (N6,N6,N6-trimethyllysine). Residues 91–94 (DAPG) are G3. GTP-binding positions include 91 to 95 (DAPGH) and 153 to 156 (NKFD). Residues 153 to 156 (NKFD) are G4. At K187 the chain carries N6,N6,N6-trimethyllysine. Residues 194 to 196 (SGW) form a G5 region. Residue K261 is modified to N6-methyllysine. 2 positions are modified to N6,N6,N6-trimethyllysine: K306 and K396.

The protein belongs to the TRAFAC class translation factor GTPase superfamily. Classic translation factor GTPase family. EF-Tu/EF-1A subfamily.

Its subcellular location is the cytoplasm. In terms of biological role, this protein promotes the GTP-dependent binding of aminoacyl-tRNA to the A-site of ribosomes during protein biosynthesis. The protein is Elongation factor 1-alpha (TEF) of Euglena gracilis.